We begin with the raw amino-acid sequence, 965 residues long: Kinesin-like protein KIN-7K, chloroplastic (965 aa).

A disordered region spans residues Met-1–Asn-69. Residues Ser-19–Ser-28 show a composition bias toward low complexity. Residues Lys-29–Gly-38 show a composition bias toward polar residues. Positions Ser-40 to Pro-56 are enriched in low complexity. The Kinesin motor domain occupies Asn-69–Ile-388. An ATP-binding site is contributed by Gly-149–Thr-156. A coiled-coil region spans residues Glu-389 to Lys-483. Residues Leu-551–Asp-561 are compositionally biased toward basic residues. 2 disordered regions span residues Leu-551–Asp-633 and Ala-842–Met-888. Low complexity predominate over residues Ser-564–Ser-577. Residues Ser-606 to Glu-623 are compositionally biased toward basic and acidic residues. Coiled-coil stretches lie at residues Ser-628–Thr-703 and Asn-738–Ser-846. The segment covering Arg-851–Asn-862 has biased composition (low complexity). The span at Gly-864–Met-888 shows a compositional bias: basic and acidic residues. Residues Tyr-896–Met-931 are a coiled coil. Residues Gln-942–Phe-965 are disordered. Polar residues predominate over residues Ser-949 to Phe-965.

It belongs to the TRAFAC class myosin-kinesin ATPase superfamily. Kinesin family. KIN-7 subfamily.

The protein resides in the plastid. It is found in the chloroplast. This chain is Kinesin-like protein KIN-7K, chloroplastic, found in Arabidopsis thaliana (Mouse-ear cress).